The following is an 88-amino-acid chain: Cell division topological specificity factor (88 aa).

The protein belongs to the MinE family.

Its function is as follows. Prevents the cell division inhibition by proteins MinC and MinD at internal division sites while permitting inhibition at polar sites. This ensures cell division at the proper site by restricting the formation of a division septum at the midpoint of the long axis of the cell. The polypeptide is Cell division topological specificity factor (Cronobacter sakazakii (strain ATCC BAA-894) (Enterobacter sakazakii)).